A 304-amino-acid polypeptide reads, in one-letter code: Porphobilinogen deaminase (304 aa).

Cysteine 241 is modified (S-(dipyrrolylmethanemethyl)cysteine).

The protein belongs to the HMBS family. In terms of assembly, monomer. Dipyrromethane serves as cofactor.

It catalyses the reaction 4 porphobilinogen + H2O = hydroxymethylbilane + 4 NH4(+). It participates in porphyrin-containing compound metabolism; protoporphyrin-IX biosynthesis; coproporphyrinogen-III from 5-aminolevulinate: step 2/4. Functionally, tetrapolymerization of the monopyrrole PBG into the hydroxymethylbilane pre-uroporphyrinogen in several discrete steps. This chain is Porphobilinogen deaminase, found in Vesicomyosocius okutanii subsp. Calyptogena okutanii (strain HA).